Here is a 142-residue protein sequence, read N- to C-terminus: 3-hydroxyacyl-[acyl-carrier-protein] dehydratase FabZ (142 aa).

The active site involves H48.

This sequence belongs to the thioester dehydratase family. FabZ subfamily.

The protein resides in the cytoplasm. It carries out the reaction a (3R)-hydroxyacyl-[ACP] = a (2E)-enoyl-[ACP] + H2O. Functionally, involved in unsaturated fatty acids biosynthesis. Catalyzes the dehydration of short chain beta-hydroxyacyl-ACPs and long chain saturated and unsaturated beta-hydroxyacyl-ACPs. The sequence is that of 3-hydroxyacyl-[acyl-carrier-protein] dehydratase FabZ from Desulforamulus reducens (strain ATCC BAA-1160 / DSM 100696 / MI-1) (Desulfotomaculum reducens).